A 353-amino-acid chain; its full sequence is Phosphoribosylformylglycinamidine cyclo-ligase (353 aa).

Belongs to the AIR synthase family.

The protein resides in the cytoplasm. It carries out the reaction 2-formamido-N(1)-(5-O-phospho-beta-D-ribosyl)acetamidine + ATP = 5-amino-1-(5-phospho-beta-D-ribosyl)imidazole + ADP + phosphate + H(+). The protein operates within purine metabolism; IMP biosynthesis via de novo pathway; 5-amino-1-(5-phospho-D-ribosyl)imidazole from N(2)-formyl-N(1)-(5-phospho-D-ribosyl)glycinamide: step 2/2. The protein is Phosphoribosylformylglycinamidine cyclo-ligase of Pseudomonas aeruginosa (strain LESB58).